The following is a 401-amino-acid chain: Phosphoglycerate kinase (401 aa).

Substrate-binding positions include Asp24–Asn26, Arg40, His63–Arg66, Arg122, and Arg155. Residues Lys206, Gly297, Glu328, and Gly357–Ser360 contribute to the ATP site.

This sequence belongs to the phosphoglycerate kinase family. As to quaternary structure, monomer.

Its subcellular location is the cytoplasm. It catalyses the reaction (2R)-3-phosphoglycerate + ATP = (2R)-3-phospho-glyceroyl phosphate + ADP. It functions in the pathway carbohydrate degradation; glycolysis; pyruvate from D-glyceraldehyde 3-phosphate: step 2/5. The chain is Phosphoglycerate kinase from Synechococcus sp. (strain CC9605).